Reading from the N-terminus, the 212-residue chain is ATP-dependent dethiobiotin synthetase BioD (212 aa).

Residue 13–18 (GIGKTV) participates in ATP binding. Thr17 provides a ligand contact to Mg(2+). Lys33 is a catalytic residue. Ser37 contacts substrate. Residue Glu100 participates in Mg(2+) binding. ATP-binding positions include 100-103 (EGAG) and 184-186 (PRL).

It belongs to the dethiobiotin synthetase family. Homodimer. Requires Mg(2+) as cofactor.

The protein localises to the cytoplasm. It catalyses the reaction (7R,8S)-7,8-diammoniononanoate + CO2 + ATP = (4R,5S)-dethiobiotin + ADP + phosphate + 3 H(+). It participates in cofactor biosynthesis; biotin biosynthesis; biotin from 7,8-diaminononanoate: step 1/2. Catalyzes a mechanistically unusual reaction, the ATP-dependent insertion of CO2 between the N7 and N8 nitrogen atoms of 7,8-diaminopelargonic acid (DAPA, also called 7,8-diammoniononanoate) to form a ureido ring. This chain is ATP-dependent dethiobiotin synthetase BioD, found in Brucella anthropi (strain ATCC 49188 / DSM 6882 / CCUG 24695 / JCM 21032 / LMG 3331 / NBRC 15819 / NCTC 12168 / Alc 37) (Ochrobactrum anthropi).